The primary structure comprises 527 residues: Bifunctional purine biosynthesis protein PurH (527 aa).

The region spanning 1-149 is the MGS-like domain; sequence MASDFLPVRR…KNFARVAVAA (149 aa).

The protein belongs to the PurH family.

It carries out the reaction (6R)-10-formyltetrahydrofolate + 5-amino-1-(5-phospho-beta-D-ribosyl)imidazole-4-carboxamide = 5-formamido-1-(5-phospho-D-ribosyl)imidazole-4-carboxamide + (6S)-5,6,7,8-tetrahydrofolate. It catalyses the reaction IMP + H2O = 5-formamido-1-(5-phospho-D-ribosyl)imidazole-4-carboxamide. The protein operates within purine metabolism; IMP biosynthesis via de novo pathway; 5-formamido-1-(5-phospho-D-ribosyl)imidazole-4-carboxamide from 5-amino-1-(5-phospho-D-ribosyl)imidazole-4-carboxamide (10-formyl THF route): step 1/1. Its pathway is purine metabolism; IMP biosynthesis via de novo pathway; IMP from 5-formamido-1-(5-phospho-D-ribosyl)imidazole-4-carboxamide: step 1/1. The polypeptide is Bifunctional purine biosynthesis protein PurH (Xanthomonas axonopodis pv. citri (strain 306)).